A 535-amino-acid polypeptide reads, in one-letter code: Aklavinone 12-hydroxylase RdmE (535 aa).

The FAD site is built by L15, G16, E35, Q119, and L143. Y224 acts as the Proton acceptor in catalysis. D308 serves as a coordination point for FAD. Residue G317 coordinates aklavinone.

It belongs to the PheA/TfdB FAD monooxygenase family. As to quaternary structure, monomer. FAD is required as a cofactor.

The catalysed reaction is aklavinone + NADPH + O2 + H(+) = epsilon-rhodomycinone + NADP(+) + H2O. It participates in antibiotic biosynthesis; daunorubicin biosynthesis. The protein operates within antibiotic biosynthesis; carminomycin biosynthesis. It functions in the pathway antibiotic biosynthesis; rhodomycin biosynthesis. With respect to regulation, inhibited by phenylglyoxal and 2,3-butanedione. NADP provides a partial protection against inhibition by phenylglyoxal. Increasing the methanol concentration in the assay causes inhibition of the enzyme. In terms of biological role, involved in the biosynthesis of the anthracyclines carminomycin, rhodomycin and daunorubicin (daunomycin) which are aromatic polyketide antibiotics that exhibit high cytotoxicity and are widely applied in the chemotherapy of a variety of cancers. Catalyzes the incorporation of a hydroxyl group at position C-11 of aklavinone, resulting in epsilon-rhodomycinone. It cannot accept substrates glycosylated at position C-7 and is specific for the C-9R configuration of anthracyclines. It can use both NAD or NADP but it is slowly inactivated in the presence of NADH. The protein is Aklavinone 12-hydroxylase RdmE (rdmE) of Streptomyces purpurascens.